The chain runs to 229 residues: MISKEYEFGKTSILNRKKYTLVIDEDKNGNFIRFTVLPVSNRKFKKVKQNGRVEINMGIQYHQIVLILLLNILFYVICLRSRFLEHINRTFEVTIARSFQILIIMGLFALGTIILVRGPSVETVTIFKESGLQLSRVKGMVIFPQQWNRKFFEQVEFISNERIIDVVINEGFCRGFRVIFYLAAIVRKSSTLKLLFPSNLPSIDDQRLIYNISRKYLSKQEKPLSRPKD.

2 consecutive transmembrane segments (helical) span residues 59–79 (IQYH…VICL) and 101–121 (ILII…GPSV).

Belongs to the PIGH family. As to quaternary structure, component of the phosphatidylinositol N-acetylglucosaminyltransferase (GPI-GlcNAc transferase) complex composed of at least GPI1, GPI2, GPI3, GPI15, GPI19 and ERI1.

It is found in the membrane. It carries out the reaction a 1,2-diacyl-sn-glycero-3-phospho-(1D-myo-inositol) + UDP-N-acetyl-alpha-D-glucosamine = a 6-(N-acetyl-alpha-D-glucosaminyl)-1-(1,2-diacyl-sn-glycero-3-phospho)-1D-myo-inositol + UDP + H(+). It participates in glycolipid biosynthesis; glycosylphosphatidylinositol-anchor biosynthesis. Part of the complex catalyzing the transfer of N-acetylglucosamine from UDP-N-acetylglucosamine to phosphatidylinositol, the first step of GPI biosynthesis. The polypeptide is Phosphatidylinositol N-acetylglucosaminyltransferase subunit GPI15 (GPI15) (Saccharomyces cerevisiae (strain ATCC 204508 / S288c) (Baker's yeast)).